The primary structure comprises 266 residues: Putative carbamate hydrolase RutD (266 aa).

It belongs to the AB hydrolase superfamily. Hydrolase RutD family.

The enzyme catalyses carbamate + 2 H(+) = NH4(+) + CO2. Its function is as follows. Involved in pyrimidine catabolism. May facilitate the hydrolysis of carbamate, a reaction that can also occur spontaneously. In Escherichia coli (strain B / BL21-DE3), this protein is Putative carbamate hydrolase RutD.